The chain runs to 535 residues: MLTSWRTISLLQKTTSRFIKRSKTYADVRYNSQALQNHGVPGNKRKWMKRFVFVGAAGIGVYAWDRVYNAHALTRSIRTVYTASIIAADYKLNFSEKKADKIDALHQRVAQRLFKTIYKNGGLYIKMGQIIAMQSNNLPEAYGKAFQGMFDNAPQVEWEELQDIFKEQYGRPVEEVFASIEKRAAASASIAQVHRAVLPSGEKVAVKIQKPDVAKQMSWDLLVYKYMMYVYDKWIFHIPLYFTVDYVSERLRSEVDFTTEANNSEHAREGVEETDYLRDKIYIPKVYKEISGKRVMVTEWADGIPLYDQTALSEAGMSKKEILTNLFRFLAFQMFHSKQVHCDPHPGNILVRKNQAGLCQTVILDHGLYVFESEKFRKEFALLFTAAYSLDKKSILQVMDAWGIGQPELFANRMLNIPMDEEQPHTGEKIISKKEAFQQQLAERKKFIGFLQDCTRLPKELLMLGRCLMLIQKNNQNFGYPVNSIAVMAKVADKYTTDKPSPTWYQRLLSPIFWVFQHLFYPGNFRLPELTNDKK.

This sequence belongs to the protein kinase superfamily. ADCK protein kinase family.

The protein is ABC1 family protein C10F6.14c of Schizosaccharomyces pombe (strain 972 / ATCC 24843) (Fission yeast).